We begin with the raw amino-acid sequence, 216 residues long: Guanylate kinase (216 aa).

Residues 12–191 enclose the Guanylate kinase-like domain; the sequence is GLLFVISSPS…CVKQVKNILT (180 aa). An ATP-binding site is contributed by 19–26; sequence SPSGAGKS.

This sequence belongs to the guanylate kinase family.

Its subcellular location is the cytoplasm. It carries out the reaction GMP + ATP = GDP + ADP. Its function is as follows. Essential for recycling GMP and indirectly, cGMP. The protein is Guanylate kinase of Zymomonas mobilis subsp. mobilis (strain ATCC 31821 / ZM4 / CP4).